A 308-amino-acid polypeptide reads, in one-letter code: Cobalamin biosynthesis protein CobD (308 aa).

Transmembrane regions (helical) follow at residues 1–21 (MEIL…GDPP), 50–70 (FVYG…PVYF), 71–91 (LLDW…AILF), 151–171 (IGDG…PGVM), 202–222 (VLNF…SFFG), and 284–304 (LVLI…VIYF).

Belongs to the CobD/CbiB family.

It localises to the cell membrane. Its pathway is cofactor biosynthesis; adenosylcobalamin biosynthesis. In terms of biological role, converts cobyric acid to cobinamide by the addition of aminopropanol on the F carboxylic group. The sequence is that of Cobalamin biosynthesis protein CobD from Dehalococcoides mccartyi (strain CBDB1).